The following is a 299-amino-acid chain: ATP phosphoribosyltransferase (299 aa).

This sequence belongs to the ATP phosphoribosyltransferase family. Long subfamily. As to quaternary structure, equilibrium between an active dimeric form, an inactive hexameric form and higher aggregates. Interconversion between the various forms is largely reversible and is influenced by the natural substrates and inhibitors of the enzyme. Mg(2+) serves as cofactor.

It is found in the cytoplasm. The enzyme catalyses 1-(5-phospho-beta-D-ribosyl)-ATP + diphosphate = 5-phospho-alpha-D-ribose 1-diphosphate + ATP. Its pathway is amino-acid biosynthesis; L-histidine biosynthesis; L-histidine from 5-phospho-alpha-D-ribose 1-diphosphate: step 1/9. With respect to regulation, feedback inhibited by histidine. Functionally, catalyzes the condensation of ATP and 5-phosphoribose 1-diphosphate to form N'-(5'-phosphoribosyl)-ATP (PR-ATP). Has a crucial role in the pathway because the rate of histidine biosynthesis seems to be controlled primarily by regulation of HisG enzymatic activity. In Sodalis glossinidius (strain morsitans), this protein is ATP phosphoribosyltransferase.